We begin with the raw amino-acid sequence, 50 residues long: ATP synthase protein 8 (50 aa).

A helical transmembrane segment spans residues 13 to 32 (ITFTFIILAITVYILSKYIL).

It belongs to the ATPase protein 8 family. As to quaternary structure, F-type ATPases have 2 components, CF(1) - the catalytic core - and CF(0) - the membrane proton channel.

It is found in the mitochondrion membrane. Its function is as follows. Mitochondrial membrane ATP synthase (F(1)F(0) ATP synthase or Complex V) produces ATP from ADP in the presence of a proton gradient across the membrane which is generated by electron transport complexes of the respiratory chain. F-type ATPases consist of two structural domains, F(1) - containing the extramembraneous catalytic core and F(0) - containing the membrane proton channel, linked together by a central stalk and a peripheral stalk. During catalysis, ATP synthesis in the catalytic domain of F(1) is coupled via a rotary mechanism of the central stalk subunits to proton translocation. Part of the complex F(0) domain. Minor subunit located with subunit a in the membrane. This Podospora anserina (strain S / ATCC MYA-4624 / DSM 980 / FGSC 10383) (Pleurage anserina) protein is ATP synthase protein 8 (ATP8).